A 379-amino-acid polypeptide reads, in one-letter code: Chaperone protein DnaJ (379 aa).

Positions 5 to 69 (EYYERLGVDK…QKRAAYDQYG (65 aa)) constitute a J domain. The CR-type zinc-finger motif lies at 141 to 223 (GVEKQVKYNR…CHGSGHEKVA (83 aa)). The Zn(2+) site is built by Cys154, Cys157, Cys171, Cys174, Cys197, Cys200, Cys211, and Cys214. CXXCXGXG motif repeat units lie at residues 154 to 161 (CHTCGGSG), 171 to 178 (CHKCGGRG), 197 to 204 (CDVCNGTG), and 211 to 218 (CETCHGSG).

The protein belongs to the DnaJ family. Homodimer. Requires Zn(2+) as cofactor.

The protein resides in the cytoplasm. Functionally, participates actively in the response to hyperosmotic and heat shock by preventing the aggregation of stress-denatured proteins and by disaggregating proteins, also in an autonomous, DnaK-independent fashion. Unfolded proteins bind initially to DnaJ; upon interaction with the DnaJ-bound protein, DnaK hydrolyzes its bound ATP, resulting in the formation of a stable complex. GrpE releases ADP from DnaK; ATP binding to DnaK triggers the release of the substrate protein, thus completing the reaction cycle. Several rounds of ATP-dependent interactions between DnaJ, DnaK and GrpE are required for fully efficient folding. Also involved, together with DnaK and GrpE, in the DNA replication of plasmids through activation of initiation proteins. This chain is Chaperone protein DnaJ, found in Lactococcus lactis subsp. lactis (strain IL1403) (Streptococcus lactis).